We begin with the raw amino-acid sequence, 58 residues long: DNA-directed RNA polymerases I, II, and III subunit RPABC4 (58 aa).

Zn(2+) is bound by residues Cys-19, Cys-22, Cys-36, and Cys-39. A C4-type zinc finger spans residues 19–39 (CGECHTENEIKSRDPIRCREC).

The protein belongs to the archaeal Rpo12/eukaryotic RPC10 RNA polymerase subunit family. In terms of assembly, component of the RNA polymerase I (Pol I), RNA polymerase II (Pol II) and RNA polymerase III (Pol III) complexes consisting of at least 13, 12 and 17 subunits, respectively. Pol I complex consists of a ten-subunit catalytic core composed of POLR1A/RPA1, POLR1B/RPA2, POLR1C/RPAC1, POLR1D/RPAC2, POLR1H/RPA12, POLR2E/RPABC1, POLR2F/RPABC2, POLR2H/RPABC3, POLR2K/RPABC4 and POLR2L/RPABC5; a mobile stalk subunit POLR1F/RPA43 protruding from the core and additional subunits homologous to general transcription factors POLR1E/RPA49 and POLR1G/RPA34. Part of Pol I pre-initiation complex (PIC), in which Pol I core assembles with RRN3 and promoter-bound UTBF and SL1/TIF-IB complex. Pol II complex contains a ten-subunit catalytic core composed of POLR2A/RPB1, POLR2B/RPB2, POLR2C/RPB3, POLR2I/RPB9, POLR2J/RPB11, POLR2E/RPABC1, POLR2F/RPABC2, POLR2H/RPABC3, POLR2K/RPABC4 and POLR2L/RPABC5 and a mobile stalk composed of two subunits POLR2D/RPB4 and POLR2G/RPB7. Part of Pol II(G) complex, in which Pol II core associates with an additional subunit POLR2M; unlike conventional Pol II, Pol II(G) functions as a transcriptional repressor. Part of TBP-based Pol II pre-initiation complex (PIC), in which Pol II core assembles with general transcription factors and other specific initiation factors including GTF2E1, GTF2E2, GTF2F1, GTF2F2, TCEA1, ERCC2, ERCC3, GTF2H2, GTF2H3, GTF2H4, GTF2H5, GTF2A1, GTF2A2, GTF2B and TBP; this large multi-subunit PIC complex mediates DNA unwinding and targets Pol II core to the transcription start site where the first phosphodiester bond forms. Pol III complex consists of a ten-subunit catalytic core composed of POLR3A/RPC1, POLR3B/RPC2, POLR1C/RPAC1, POLR1D/RPAC2, POLR3K/RPC10, POLR2E/RPABC1, POLR2F/RPABC2, POLR2H/RPABC3, POLR2K/RPABC4 and POLR2L/RPABC5; a mobile stalk composed of two subunits POLR3H/RPC8 and CRCP/RPC9, protruding from the core and functioning primarily in transcription initiation; and additional subunits homologous to general transcription factors of the RNA polymerase II machinery, POLR3C/RPC3-POLR3F/RPC6-POLR3G/RPC7 heterotrimer required for transcription initiation and POLR3D/RPC4-POLR3E/RPC5 heterodimer involved in both transcription initiation and termination.

The protein localises to the nucleus. It is found in the nucleolus. In terms of biological role, DNA-dependent RNA polymerase catalyzes the transcription of DNA into RNA using the four ribonucleoside triphosphates as substrates. Common component of RNA polymerases I, II and III which synthesize ribosomal RNA precursors, mRNA precursors and many functional non-coding RNAs, and a small RNAs, such as 5S rRNA and tRNAs, respectively. The chain is DNA-directed RNA polymerases I, II, and III subunit RPABC4 (Polr2k) from Mus musculus (Mouse).